Here is a 55-residue protein sequence, read N- to C-terminus: Spermatid nuclear transition protein 1 (55 aa).

Basic residues predominate over residues 1 to 42; it reads MSTSRKLKSQGTRRGKNRTPHKGVKRGCSKRKYRKSSLKSRK. The interval 1–55 is disordered; the sequence is MSTSRKLKSQGTRRGKNRTPHKGVKRGCSKRKYRKSSLKSRKRCDDANRNFRSHL. A phosphoserine mark is found at Ser-9, Ser-36, Ser-37, and Ser-40.

This sequence belongs to the nuclear transition protein 1 family. Testis.

It is found in the nucleus. The protein localises to the chromosome. In terms of biological role, plays a key role in the replacement of histones to protamine in the elongating spermatids of mammals. In condensing spermatids, loaded onto the nucleosomes, where it promotes the recruitment and processing of protamines, which are responsible for histone eviction. The protein is Spermatid nuclear transition protein 1 (TNP1) of Ovis aries (Sheep).